The primary structure comprises 335 residues: UPF0353 protein Mvan_2751 (335 aa).

The next 2 membrane-spanning stretches (helical) occupy residues 18-38 (WFFLFFLVVLGLVALYVIVQM) and 67-87 (LPAVLLILSLMSFTVAMAGPT). The region spanning 98–294 (VVMLVIDVSQ…EQLKQVFTNL (197 aa)) is the VWFA domain. Residues 309–329 (VGWLRIGSLVLALAALGALLI) traverse the membrane as a helical segment.

It belongs to the UPF0353 family.

The protein localises to the cell membrane. The polypeptide is UPF0353 protein Mvan_2751 (Mycolicibacterium vanbaalenii (strain DSM 7251 / JCM 13017 / BCRC 16820 / KCTC 9966 / NRRL B-24157 / PYR-1) (Mycobacterium vanbaalenii)).